A 172-amino-acid polypeptide reads, in one-letter code: Peptide methionine sulfoxide reductase MsrA (172 aa).

Residue Cys-12 is part of the active site.

Belongs to the MsrA Met sulfoxide reductase family.

The catalysed reaction is L-methionyl-[protein] + [thioredoxin]-disulfide + H2O = L-methionyl-(S)-S-oxide-[protein] + [thioredoxin]-dithiol. The enzyme catalyses [thioredoxin]-disulfide + L-methionine + H2O = L-methionine (S)-S-oxide + [thioredoxin]-dithiol. Has an important function as a repair enzyme for proteins that have been inactivated by oxidation. Catalyzes the reversible oxidation-reduction of methionine sulfoxide in proteins to methionine. The sequence is that of Peptide methionine sulfoxide reductase MsrA from Ligilactobacillus salivarius (strain UCC118) (Lactobacillus salivarius).